We begin with the raw amino-acid sequence, 405 residues long: Glucose-1-phosphate adenylyltransferase 1 (405 aa).

Alpha-D-glucose 1-phosphate contacts are provided by residues Tyr-96, Gly-161, 176–177 (EK), and Ser-194.

This sequence belongs to the bacterial/plant glucose-1-phosphate adenylyltransferase family. In terms of assembly, homotetramer.

The catalysed reaction is alpha-D-glucose 1-phosphate + ATP + H(+) = ADP-alpha-D-glucose + diphosphate. Its pathway is glycan biosynthesis; glycogen biosynthesis. Its function is as follows. Involved in the biosynthesis of ADP-glucose, a building block required for the elongation reactions to produce glycogen. Catalyzes the reaction between ATP and alpha-D-glucose 1-phosphate (G1P) to produce pyrophosphate and ADP-Glc. In Vibrio cholerae serotype O1 (strain ATCC 39315 / El Tor Inaba N16961), this protein is Glucose-1-phosphate adenylyltransferase 1.